We begin with the raw amino-acid sequence, 828 residues long: Periplasmic nitrate reductase (828 aa).

Positions 1–33 (MKLSRRDFMKANAAVAAAAAAGLTIPTVVQAAA) form a signal peptide, tat-type signal. Residues 39–95 (IKWDKAPCRFCGTGCGVLVGTQNGRIVASQGDPEAAVNRGLSCIKGYFLPKIMYGKD) form the 4Fe-4S Mo/W bis-MGD-type domain. [4Fe-4S] cluster contacts are provided by cysteine 46, cysteine 49, cysteine 53, and cysteine 81. Mo-bis(molybdopterin guanine dinucleotide) is bound by residues lysine 83, glutamine 150, asparagine 175, cysteine 179, 212-219 (WGSNMAEM), 243-247 (STFEH), 262-264 (QTD), methionine 372, glutamine 376, asparagine 482, 508-509 (SD), lysine 531, aspartate 558, and 718-727 (TGRVLEHWHT). A substrate-binding site is contributed by phenylalanine 794. 2 residues coordinate Mo-bis(molybdopterin guanine dinucleotide): asparagine 802 and lysine 819.

Belongs to the prokaryotic molybdopterin-containing oxidoreductase family. NasA/NapA/NarB subfamily. In terms of assembly, component of the periplasmic nitrate reductase NapAB complex composed of NapA and NapB. Requires [4Fe-4S] cluster as cofactor. The cofactor is Mo-bis(molybdopterin guanine dinucleotide). In terms of processing, predicted to be exported by the Tat system. The position of the signal peptide cleavage has not been experimentally proven.

It is found in the periplasm. The enzyme catalyses 2 Fe(II)-[cytochrome] + nitrate + 2 H(+) = 2 Fe(III)-[cytochrome] + nitrite + H2O. Catalytic subunit of the periplasmic nitrate reductase complex NapAB. Receives electrons from NapB and catalyzes the reduction of nitrate to nitrite. This is Periplasmic nitrate reductase from Serratia proteamaculans (strain 568).